The following is a 271-amino-acid chain: tRNA pseudouridine synthase A (271 aa).

Aspartate 52 serves as the catalytic Nucleophile. Tyrosine 110 provides a ligand contact to substrate.

This sequence belongs to the tRNA pseudouridine synthase TruA family. In terms of assembly, homodimer.

The catalysed reaction is uridine(38/39/40) in tRNA = pseudouridine(38/39/40) in tRNA. In terms of biological role, formation of pseudouridine at positions 38, 39 and 40 in the anticodon stem and loop of transfer RNAs. This is tRNA pseudouridine synthase A from Burkholderia mallei (strain NCTC 10247).